The sequence spans 417 residues: Maltodextrin-binding protein MdxE (417 aa).

Residues 1–22 form the signal peptide; that stretch reads MVLLKKGFAILAASFLAIGLAA. Cys23 is lipidated: N-palmitoyl cysteine. A lipid anchor (S-diacylglycerol cysteine) is attached at Cys23.

The protein belongs to the bacterial solute-binding protein 1 family. The complex is composed of two ATP-binding proteins (MsmX), two transmembrane proteins (MdxF and MdxG) and a solute-binding protein (MdxE).

Its subcellular location is the cell membrane. Inhibited by glucose and lactose. Its function is as follows. Part of the ABC transporter complex involved in maltodextrin import. Binds maltodextrin. Can also bind maltose with low affinity, but is not involved in its uptake. In Bacillus subtilis (strain 168), this protein is Maltodextrin-binding protein MdxE (mdxE).